Consider the following 217-residue polypeptide: Peptide methionine sulfoxide reductase MsrA (217 aa).

Residue cysteine 54 is part of the active site.

It belongs to the MsrA Met sulfoxide reductase family.

The catalysed reaction is L-methionyl-[protein] + [thioredoxin]-disulfide + H2O = L-methionyl-(S)-S-oxide-[protein] + [thioredoxin]-dithiol. It carries out the reaction [thioredoxin]-disulfide + L-methionine + H2O = L-methionine (S)-S-oxide + [thioredoxin]-dithiol. In terms of biological role, has an important function as a repair enzyme for proteins that have been inactivated by oxidation. Catalyzes the reversible oxidation-reduction of methionine sulfoxide in proteins to methionine. This chain is Peptide methionine sulfoxide reductase MsrA, found in Maricaulis maris (strain MCS10) (Caulobacter maris).